The following is a 539-amino-acid chain: Putative S-adenosyl-L-methionine-dependent methyltransferase MAP_4079 (539 aa).

S-adenosyl-L-methionine contacts are provided by residues Asp-134 and 163 to 164 (DL). Positions 290–392 (AGYGRGRRRP…RGEPGERGGQ (103 aa)) are disordered. Over residues 301 to 313 (SATSCRGTCSSPR) the composition is skewed to polar residues. Gly residues predominate over residues 341–351 (HGFGNQCGGPD).

Belongs to the UPF0677 family.

In terms of biological role, exhibits S-adenosyl-L-methionine-dependent methyltransferase activity. This chain is Putative S-adenosyl-L-methionine-dependent methyltransferase MAP_4079, found in Mycolicibacterium paratuberculosis (strain ATCC BAA-968 / K-10) (Mycobacterium paratuberculosis).